The primary structure comprises 72 residues: Large ribosomal subunit protein uL29 (72 aa).

Belongs to the universal ribosomal protein uL29 family.

This Chlamydia caviae (strain ATCC VR-813 / DSM 19441 / 03DC25 / GPIC) (Chlamydophila caviae) protein is Large ribosomal subunit protein uL29.